A 499-amino-acid chain; its full sequence is Apolipoprotein N-acyltransferase (499 aa).

6 helical membrane-spanning segments follow: residues 9–29, 50–70, 77–97, 114–134, 148–168, and 183–203; these read LLLGLLSGLVFAPTFLLPALL, LGYIFGFGHFLSGIYWISIGV, FWWAIPFALFGLPIILAFFVS, FIFCLYWVLFEWVRSWIFTGL, ILIQSLNIIGIYGLSFIVIYI, and LKVLLLTSSITLAVIITYGSV. The 245-residue stretch at 220 to 464 folds into the CN hydrolase domain; it reads VQPSIPQTEK…DGLIPKKLDS (245 aa). Catalysis depends on Glu259, which acts as the Proton acceptor. Lys322 is an active-site residue. Catalysis depends on Cys372, which acts as the Nucleophile. The helical transmembrane segment at 466 to 486 threads the bilayer; that stretch reads TIFSKFGNITILLIVFFIFLV.

It belongs to the CN hydrolase family. Apolipoprotein N-acyltransferase subfamily.

The protein resides in the cell inner membrane. It carries out the reaction N-terminal S-1,2-diacyl-sn-glyceryl-L-cysteinyl-[lipoprotein] + a glycerophospholipid = N-acyl-S-1,2-diacyl-sn-glyceryl-L-cysteinyl-[lipoprotein] + a 2-acyl-sn-glycero-3-phospholipid + H(+). Its pathway is protein modification; lipoprotein biosynthesis (N-acyl transfer). Its function is as follows. Catalyzes the phospholipid dependent N-acylation of the N-terminal cysteine of apolipoprotein, the last step in lipoprotein maturation. This is Apolipoprotein N-acyltransferase from Rickettsia bellii (strain RML369-C).